The following is a 428-amino-acid chain: Tyrosine--tRNA ligase (428 aa).

Y41 is an L-tyrosine binding site. Residues 46–55 (PTADSLHLGH) carry the 'HIGH' region motif. Residues Y179 and Q183 each contribute to the L-tyrosine site. The 'KMSKS' region motif lies at 239-243 (KFGKT). K242 contributes to the ATP binding site. Residues 361–418 (ADLMQALVDAELQPSRGQARKTIASNAVTINGEKQSDPEYIFNDEDRLFGRYTLLRRG) form the S4 RNA-binding domain.

The protein belongs to the class-I aminoacyl-tRNA synthetase family. TyrS type 1 subfamily. Homodimer.

It is found in the cytoplasm. The enzyme catalyses tRNA(Tyr) + L-tyrosine + ATP = L-tyrosyl-tRNA(Tyr) + AMP + diphosphate + H(+). Functionally, catalyzes the attachment of tyrosine to tRNA(Tyr) in a two-step reaction: tyrosine is first activated by ATP to form Tyr-AMP and then transferred to the acceptor end of tRNA(Tyr). In Salmonella paratyphi C (strain RKS4594), this protein is Tyrosine--tRNA ligase.